A 154-amino-acid polypeptide reads, in one-letter code: Large ribosomal subunit protein uL15 (154 aa).

The disordered stretch occupies residues Met1–Val44. Positions Arg21 to Val35 are enriched in gly residues.

It belongs to the universal ribosomal protein uL15 family. Part of the 50S ribosomal subunit.

Functionally, binds to the 23S rRNA. In Bartonella quintana (strain Toulouse) (Rochalimaea quintana), this protein is Large ribosomal subunit protein uL15.